We begin with the raw amino-acid sequence, 117 residues long: Large ribosomal subunit protein bL20 (117 aa).

Belongs to the bacterial ribosomal protein bL20 family.

Binds directly to 23S ribosomal RNA and is necessary for the in vitro assembly process of the 50S ribosomal subunit. It is not involved in the protein synthesizing functions of that subunit. The polypeptide is Large ribosomal subunit protein bL20 (Campylobacter fetus subsp. fetus (strain 82-40)).